We begin with the raw amino-acid sequence, 666 residues long: Spartin (666 aa).

The residue at position 1 (Met1) is an N-acetylmethionine. One can recognise an MIT domain in the interval 16 to 94 (IREAYKKAFL…LQNVRTRLEI (79 aa)). The segment at 124–156 (EKLPEPQSFSSAPQHAEVNGNTSTPSAGAVAAP) is disordered. Low complexity predominate over residues 146-156 (STPSAGAVAAP). The interval 190-380 (DSGEFSSVGE…QLDQGNKDVR (191 aa)) is ubiquitin-binding region (UBR) domain. The LC3-interacting region (LIR); mediates interaction with MAP1LC3A AND MAP1LC3C motif lies at 193-200 (EFSSVGEE). Residues 344–398 (EENEFQIPGRTRPSSDQLKEASGTDVKQLDQGNKDVRHKGKRGKRAKDTSSEEVN) form a disordered region. Residue Lys362 forms a Glycyl lysine isopeptide (Lys-Gly) (interchain with G-Cter in ubiquitin) linkage. Over residues 379-388 (VRHKGKRGKR) the composition is skewed to basic residues. In terms of domain architecture, Senescence spans 427–611 (ILSGASWVSW…YNINNIGIKA (185 aa)). The interval 431-503 (ASWVSWGLVK…LVDGVCTVAN (73 aa)) is required for localization to lipid droplets. Ser470 is subject to Phosphoserine. Residues 636–666 (RENQEGAANVNVRGEKDEQTKEVKEAKKKDK) form a disordered region. Residues 648–666 (RGEKDEQTKEVKEAKKKDK) show a composition bias toward basic and acidic residues.

Interacts with ITCH and WWP1. Interacts (via MIT domain) with IST1; leading to the recruitment of SPART to midbodies. Interacts with MAP1LC3A and MAP1LC3C. Post-translationally, ubiquitinated; ubiquitination does not require ITCH and WWP1. Ubiquitously expressed, with highest levels of expression detected in adipose tissue.

The protein resides in the cytoplasm. Its subcellular location is the midbody. It localises to the lipid droplet. Functionally, lipophagy receptor that plays an important role in lipid droplet (LD) turnover in motor neurons. Localizes to LDs and interacts with components of the autophagy machinery, such as MAP1LC3A/C proteins to deliver LDs to autophagosomes for degradation via lipophagy. Lipid transfer protein required for lipid droplet degradation, including by lipophagy. Can bind and transfer all lipid species found in lipid droplets, from phospholipids to triglycerides and sterol esters but the direction of lipid transfer by spartin and its cargos are unknown. May be implicated in endosomal trafficking, or microtubule dynamics, or both. Participates in cytokinesis. The protein is Spartin of Homo sapiens (Human).